We begin with the raw amino-acid sequence, 310 residues long: p-hydroxybenzoic acid efflux pump subunit AaeA (310 aa).

Residues A12 to Y32 traverse the membrane as a helical segment.

It belongs to the membrane fusion protein (MFP) (TC 8.A.1) family.

It localises to the cell inner membrane. Its function is as follows. Forms an efflux pump with AaeB. This chain is p-hydroxybenzoic acid efflux pump subunit AaeA, found in Salmonella schwarzengrund (strain CVM19633).